A 229-amino-acid polypeptide reads, in one-letter code: RNA pyrophosphohydrolase (229 aa).

Residues 6 to 149 (GFRPNVGIIL…KRGVYEMALT (144 aa)) form the Nudix hydrolase domain. A Nudix box motif is present at residues 38–59 (GGIDRGETPEQAMFRELHEEVG). Residues 191–229 (KPGMELPPGASFDPDPQNSVPAPLEALPTLPVPKKPLDA) are disordered. Over residues 220–229 (LPVPKKPLDA) the composition is skewed to pro residues.

Belongs to the Nudix hydrolase family. RppH subfamily. A divalent metal cation serves as cofactor.

In terms of biological role, accelerates the degradation of transcripts by removing pyrophosphate from the 5'-end of triphosphorylated RNA, leading to a more labile monophosphorylated state that can stimulate subsequent ribonuclease cleavage. The protein is RNA pyrophosphohydrolase of Acidovorax ebreus (strain TPSY) (Diaphorobacter sp. (strain TPSY)).